The chain runs to 495 residues: Cobyric acid synthase (495 aa).

The GATase cobBQ-type domain maps to 250-444 (SLKISILRLP…LHGLFDNGAW (195 aa)). Residue cysteine 331 is the Nucleophile of the active site. Histidine 436 is an active-site residue.

Belongs to the CobB/CobQ family. CobQ subfamily.

Its pathway is cofactor biosynthesis; adenosylcobalamin biosynthesis. In terms of biological role, catalyzes amidations at positions B, D, E, and G on adenosylcobyrinic A,C-diamide. NH(2) groups are provided by glutamine, and one molecule of ATP is hydrogenolyzed for each amidation. The sequence is that of Cobyric acid synthase from Rippkaea orientalis (strain PCC 8801 / RF-1) (Cyanothece sp. (strain PCC 8801)).